The primary structure comprises 554 residues: 3-(3-hydroxy-phenyl)propionate/3-hydroxycinnamic acid hydroxylase (554 aa).

FAD is bound by residues 17-46 and 285-295; these read QVAIAGAGPVGLMMANYLGQMGIDVLVVEK and FRIDRVLLAGD.

The protein belongs to the PheA/TfdB FAD monooxygenase family. It depends on FAD as a cofactor.

It catalyses the reaction 3-(3-hydroxyphenyl)propanoate + NADH + O2 + H(+) = 3-(2,3-dihydroxyphenyl)propanoate + NAD(+) + H2O. The catalysed reaction is (2E)-3-(3-hydroxyphenyl)prop-2-enoate + NADH + O2 + H(+) = (2E)-3-(2,3-dihydroxyphenyl)prop-2-enoate + NAD(+) + H2O. Its pathway is aromatic compound metabolism; 3-phenylpropanoate degradation. Functionally, catalyzes the insertion of one atom of molecular oxygen into position 2 of the phenyl ring of 3-(3-hydroxyphenyl)propionate (3-HPP) and hydroxycinnamic acid (3HCI). The sequence is that of 3-(3-hydroxy-phenyl)propionate/3-hydroxycinnamic acid hydroxylase from Escherichia coli O157:H7.